The sequence spans 161 residues: Urease accessory protein UreE (161 aa).

The interval 138–161 (RGAYHAHGGHSHDHGQGHHHHDHG) is disordered.

The protein belongs to the UreE family.

Its subcellular location is the cytoplasm. In terms of biological role, involved in urease metallocenter assembly. Binds nickel. Probably functions as a nickel donor during metallocenter assembly. The chain is Urease accessory protein UreE from Agrobacterium fabrum (strain C58 / ATCC 33970) (Agrobacterium tumefaciens (strain C58)).